Reading from the N-terminus, the 334-residue chain is Probable tRNA pseudouridine synthase B (334 aa).

The Nucleophile role is filled by aspartate 82. In terms of domain architecture, PUA spans 250-325; that stretch reads LPKIWIKDSA…IAVDVEKVFM (76 aa).

It belongs to the pseudouridine synthase TruB family. Type 2 subfamily.

The catalysed reaction is uridine(55) in tRNA = pseudouridine(55) in tRNA. Could be responsible for synthesis of pseudouridine from uracil-55 in the psi GC loop of transfer RNAs. The polypeptide is Probable tRNA pseudouridine synthase B (Pyrococcus horikoshii (strain ATCC 700860 / DSM 12428 / JCM 9974 / NBRC 100139 / OT-3)).